Reading from the N-terminus, the 546-residue chain is MTVTVEPSITTGPIAGSSKAYREVAGPDGVTLRVPLRRVHLSTGADFDLYDTSGPYTDPNAVIDLAVGLPARPGLVRDRGTQLQRARAGEITAEMAFIAAREGMSAELVRDEVALGRAVIPANHNHPESEPMVIGKAFAVKVNANIGNSAVTSSIAEEVDKMVWATRWGADTIMDLSTGKNIHETREWILRNSPVPVGTVPIYQALEKVKGDPTELTWELYRDTVIEQCEQGVDYMTVHAGVLLRYVPLTAKRVTGIVSRGGSIMAAWCLAHHRESFLYTNFEELCDILARYDVTFSLGDGLRPGSIADANDAAQFAELRTLGELTKIAKAHGVQVMIEGPGHVPMHKIVENVRLEEELCEEAPFYTLGPLATDIAPAYDHITSAIGAAIIAQAGTAMLCYVTPKEHLGLPDRKDVKDGVIAYKIAAHAGDLAKGHPHAQERDNALSQARFEFRWNDQFALSLDPDTAREYHDETLPAEPAKTAHFCSMCGPKFCSMRITQDVRDYAAKHGLDSEEAIEAALEAGMAEKSAEFADHGNRVYLPITQ.

Residues Asn-145, Met-174, Tyr-203, His-239, 259 to 261, 300 to 303, and Glu-339 each bind substrate; these read SRG and DGLR. His-343 contacts Zn(2+). Tyr-366 lines the substrate pocket. His-407 provides a ligand contact to Zn(2+). Residues Cys-487, Cys-490, and Cys-495 each contribute to the [4Fe-4S] cluster site.

The protein belongs to the ThiC family. [4Fe-4S] cluster is required as a cofactor.

The enzyme catalyses 5-amino-1-(5-phospho-beta-D-ribosyl)imidazole + S-adenosyl-L-methionine = 4-amino-2-methyl-5-(phosphooxymethyl)pyrimidine + CO + 5'-deoxyadenosine + formate + L-methionine + 3 H(+). Its pathway is cofactor biosynthesis; thiamine diphosphate biosynthesis. Its function is as follows. Catalyzes the synthesis of the hydroxymethylpyrimidine phosphate (HMP-P) moiety of thiamine from aminoimidazole ribotide (AIR) in a radical S-adenosyl-L-methionine (SAM)-dependent reaction. This Mycobacterium marinum (strain ATCC BAA-535 / M) protein is Phosphomethylpyrimidine synthase.